Consider the following 361-residue polypeptide: Histidinol-phosphate aminotransferase (361 aa).

The residue at position 219 (Lys219) is an N6-(pyridoxal phosphate)lysine.

The protein belongs to the class-II pyridoxal-phosphate-dependent aminotransferase family. Histidinol-phosphate aminotransferase subfamily. As to quaternary structure, homodimer. It depends on pyridoxal 5'-phosphate as a cofactor.

The catalysed reaction is L-histidinol phosphate + 2-oxoglutarate = 3-(imidazol-4-yl)-2-oxopropyl phosphate + L-glutamate. It participates in amino-acid biosynthesis; L-histidine biosynthesis; L-histidine from 5-phospho-alpha-D-ribose 1-diphosphate: step 7/9. In Cereibacter sphaeroides (strain KD131 / KCTC 12085) (Rhodobacter sphaeroides), this protein is Histidinol-phosphate aminotransferase.